Consider the following 734-residue polypeptide: Cytoplasmic polyadenylation element-binding protein 3 (734 aa).

Disordered stretches follow at residues methionine 1–proline 31, glycine 98–asparagine 185, and arginine 220–arginine 283. Residues proline 16 to glycine 26 show a composition bias toward basic and acidic residues. Low complexity-rich tracts occupy residues serine 121–arginine 140 and lysine 232–serine 242. Residues proline 243–glutamine 256 show a composition bias toward basic and acidic residues. Over residues tyrosine 259–serine 275 the composition is skewed to polar residues. Residues isoleucine 294–glycine 316 enclose the RRM domain. Disordered regions lie at residues lysine 564–serine 593 and threonine 630–asparagine 657. Residues leucine 576–serine 593 are compositionally biased toward low complexity.

In terms of biological role, cytoplasmic polyadenylation element binding protein that binds to and regulates the translation of specific mRNAs. In Caenorhabditis japonica, this protein is Cytoplasmic polyadenylation element-binding protein 3 (cpb-3).